We begin with the raw amino-acid sequence, 271 residues long: Formamidopyrimidine-DNA glycosylase (271 aa).

Proline 2 (schiff-base intermediate with DNA) is an active-site residue. The active-site Proton donor is the glutamate 3. Lysine 58 functions as the Proton donor; for beta-elimination activity in the catalytic mechanism. Residues histidine 92, arginine 111, and arginine 152 each coordinate DNA. The segment at 237–271 adopts an FPG-type zinc-finger fold; sequence TVYGREGEPCKQCGRVLKHAMIGQRATVWCGSCQR. Arginine 261 acts as the Proton donor; for delta-elimination activity in catalysis.

This sequence belongs to the FPG family. Monomer. The cofactor is Zn(2+).

The catalysed reaction is Hydrolysis of DNA containing ring-opened 7-methylguanine residues, releasing 2,6-diamino-4-hydroxy-5-(N-methyl)formamidopyrimidine.. It catalyses the reaction 2'-deoxyribonucleotide-(2'-deoxyribose 5'-phosphate)-2'-deoxyribonucleotide-DNA = a 3'-end 2'-deoxyribonucleotide-(2,3-dehydro-2,3-deoxyribose 5'-phosphate)-DNA + a 5'-end 5'-phospho-2'-deoxyribonucleoside-DNA + H(+). Functionally, involved in base excision repair of DNA damaged by oxidation or by mutagenic agents. Acts as a DNA glycosylase that recognizes and removes damaged bases. Has a preference for oxidized purines, such as 7,8-dihydro-8-oxoguanine (8-oxoG). Has AP (apurinic/apyrimidinic) lyase activity and introduces nicks in the DNA strand. Cleaves the DNA backbone by beta-delta elimination to generate a single-strand break at the site of the removed base with both 3'- and 5'-phosphates. The sequence is that of Formamidopyrimidine-DNA glycosylase from Xanthomonas oryzae pv. oryzae (strain MAFF 311018).